A 386-amino-acid polypeptide reads, in one-letter code: Succinate--CoA ligase [ADP-forming] subunit beta (386 aa).

In terms of domain architecture, ATP-grasp spans 9–244 (KEILRSYGVS…LDEEDPKEVE (236 aa)). Residues K46, 53-55 (GRG), E99, C102, and E107 each bind ATP. Positions 199 and 213 each coordinate Mg(2+). Substrate is bound by residues N264 and 321–323 (GIM).

Belongs to the succinate/malate CoA ligase beta subunit family. Heterotetramer of two alpha and two beta subunits. The cofactor is Mg(2+).

It carries out the reaction succinate + ATP + CoA = succinyl-CoA + ADP + phosphate. It catalyses the reaction GTP + succinate + CoA = succinyl-CoA + GDP + phosphate. The protein operates within carbohydrate metabolism; tricarboxylic acid cycle; succinate from succinyl-CoA (ligase route): step 1/1. Functionally, succinyl-CoA synthetase functions in the citric acid cycle (TCA), coupling the hydrolysis of succinyl-CoA to the synthesis of either ATP or GTP and thus represents the only step of substrate-level phosphorylation in the TCA. The beta subunit provides nucleotide specificity of the enzyme and binds the substrate succinate, while the binding sites for coenzyme A and phosphate are found in the alpha subunit. The polypeptide is Succinate--CoA ligase [ADP-forming] subunit beta (Geobacillus thermodenitrificans (strain NG80-2)).